The chain runs to 2209 residues: Genome polyprotein (2209 aa).

Gly2 carries N-myristoyl glycine; by host lipidation. Topologically, residues 2-1520 (GAQVSSQKVG…NINRAMTILQ (1519 aa)) are cytoplasmic. The amphipathic alpha-helix stretch occupies residues 580–600 (GLGQMLESMIDNTVRETVGAA). The interval 599–619 (AATSRDALPNTEASGPTHSKE) is disordered. Residues His901 and Asp919 each act as for protease 2A activity in the active site. The Zn(2+) site is built by Cys936 and Cys938. Cys990 acts as the For protease 2A activity in catalysis. Zn(2+) contacts are provided by Cys996 and His998. The interval 1128-1200 (GDSWLKKFTE…HQSCPSQEHQ (73 aa)) is membrane-binding. The tract at residues 1128–1266 (GDSWLKKFTE…SPGTGKSVAT (139 aa)) is oligomerization. The tract at residues 1149 to 1153 (SNKIS) is RNA-binding. Residues 1232 to 1388 (EHTINNYIQF…NEYSRDGKLN (157 aa)) enclose the SF3 helicase domain. Residue 1256 to 1263 (GSPGTGKS) participates in ATP binding. Zn(2+) contacts are provided by Cys1396, Cys1399, Cys1408, and Cys1413. The segment at 1396 to 1413 (CKNCHQPANFKRCCPLVC) adopts a C4-type zinc-finger fold. The interval 1440-1447 (ERNRRSNI) is RNA-binding. The oligomerization stretch occupies residues 1451–1456 (MEALFQ). An intramembrane segment occupies 1521-1536 (AVTTFAAVAGVVYVMY). At 1537–2209 (KLFAGHQGAY…TLYRRWLDSF (673 aa)) the chain is on the cytoplasmic side. Tyr1546 carries the post-translational modification O-(5'-phospho-RNA)-tyrosine. O-UMP-tyrosine; transient is present on Tyr1546. The Peptidase C3 domain occupies 1566-1744 (GPGFDYAVAM…FAAALKRSYF (179 aa)). Active-site for protease 3C activity residues include His1605, Glu1636, and Cys1712. The RdRp catalytic domain occupies 1975-2090 (EKLFAFDYTG…SYPHEVDASL (116 aa)). Positions 1981 and 2076 each coordinate Mg(2+).

Belongs to the picornaviruses polyprotein family. In terms of assembly, interacts with capsid protein VP1 and capsid protein VP3 to form heterotrimeric protomers. As to quaternary structure, interacts with capsid protein VP0, and capsid protein VP3 to form heterotrimeric protomers. Five protomers subsequently associate to form pentamers which serve as building blocks for the capsid. Interacts with capsid protein VP2, capsid protein VP3 and capsid protein VP4 following cleavage of capsid protein VP0. Interacts with human PVR. Interacts with capsid protein VP1 and capsid protein VP3 in the mature capsid. In terms of assembly, interacts with capsid protein VP0 and capsid protein VP1 to form heterotrimeric protomers. Five protomers subsequently associate to form pentamers which serve as building blocks for the capsid. Interacts with capsid protein VP4 in the mature capsid. Interacts with protein 2C; this interaction may be important for virion morphogenesis. As to quaternary structure, interacts with capsid protein VP1 and capsid protein VP3. Homodimer. In terms of assembly, homohexamer; forms a hexameric ring structure with 6-fold symmetry characteristic of AAA+ ATPases. Interacts (via N-terminus) with host RTN3 (via reticulon domain); this interaction is important for viral replication. Interacts with capsid protein VP3; this interaction may be important for virion morphogenesis. As to quaternary structure, interacts with protein 3CD. Homodimer. Interacts with host GBF1. Interacts (via GOLD domain) with host ACBD3 (via GOLD domain); this interaction allows the formation of a viral protein 3A/ACBD3 heterotetramer with a 2:2 stoichiometry, which will stimulate the recruitment of host PI4KB in order to synthesize PI4P at the viral RNA replication sites. In terms of assembly, interacts with RNA-directed RNA polymerase. As to quaternary structure, interacts with protein 3AB and with RNA-directed RNA polymerase. Interacts with Viral protein genome-linked and with protein 3CD. Requires Mg(2+) as cofactor. Post-translationally, specific enzymatic cleavages in vivo by the viral proteases yield processing intermediates and the mature proteins. In terms of processing, myristoylation is required for the formation of pentamers during virus assembly. Further assembly of 12 pentamers and a molecule of genomic RNA generates the provirion. During virion maturation, immature virions are rendered infectious following cleavage of VP0 into VP4 and VP2. This maturation seems to be an autocatalytic event triggered by the presence of RNA in the capsid and it is followed by a conformational change infectious virion. Post-translationally, myristoylation is required during RNA encapsidation and formation of the mature virus particle. In terms of processing, VPg is uridylylated by the polymerase into VPg-pUpU. This acts as a nucleotide-peptide primer for the genomic RNA replication.

It localises to the virion. It is found in the host cytoplasm. The protein localises to the host cytoplasmic vesicle membrane. Its subcellular location is the host nucleus. It carries out the reaction RNA(n) + a ribonucleoside 5'-triphosphate = RNA(n+1) + diphosphate. It catalyses the reaction Selective cleavage of Tyr-|-Gly bond in the picornavirus polyprotein.. The catalysed reaction is a ribonucleoside 5'-triphosphate + H2O = a ribonucleoside 5'-diphosphate + phosphate + H(+). The enzyme catalyses Selective cleavage of Gln-|-Gly bond in the poliovirus polyprotein. In other picornavirus reactions Glu may be substituted for Gln, and Ser or Thr for Gly.. Its activity is regulated as follows. Replication or transcription is subject to high level of random mutations by the nucleotide analog ribavirin. Functionally, forms an icosahedral capsid of pseudo T=3 symmetry with capsid proteins VP2 and VP3. The capsid is 300 Angstroms in diameter, composed of 60 copies of each capsid protein and enclosing the viral positive strand RNA genome. Capsid protein VP1 mainly forms the vertices of the capsid. Capsid protein VP1 interacts with host cell receptor PVR to provide virion attachment to target host epithelial cells. This attachment induces virion internalization predominantly through clathrin- and caveolin-independent endocytosis in Hela cells and through caveolin-mediated endocytosis in brain microvascular endothelial cells. Tyrosine kinases are probably involved in the entry process. Virus binding to PVR induces increased junctional permeability and rearrangement of junctional proteins. Modulation of endothelial tight junctions, as well as cytolytic infection of endothelial cells themselves, may result in loss of endothelial integrity which may help the virus to reach the CNS. After binding to its receptor, the capsid undergoes conformational changes. Capsid protein VP1 N-terminus (that contains an amphipathic alpha-helix) and capsid protein VP4 are externalized. Together, they shape a pore in the host membrane through which viral genome is translocated to host cell cytoplasm. In terms of biological role, forms an icosahedral capsid of pseudo T=3 symmetry with capsid proteins VP1 and VP3. The capsid is 300 Angstroms in diameter, composed of 60 copies of each capsid protein and enclosing the viral positive strand RNA genome. Its function is as follows. Forms an icosahedral capsid of pseudo T=3 symmetry with capsid proteins VP2 and VP1. The capsid is 300 Angstroms in diameter, composed of 60 copies of each capsid protein and enclosing the viral positive strand RNA genome. Lies on the inner surface of the capsid shell. After binding to the host receptor, the capsid undergoes conformational changes. Capsid protein VP4 is released, Capsid protein VP1 N-terminus is externalized, and together, they shape a pore in the host membrane through which the viral genome is translocated into the host cell cytoplasm. Functionally, component of immature procapsids, which is cleaved into capsid proteins VP4 and VP2 after maturation. Allows the capsid to remain inactive before the maturation step. In terms of biological role, cysteine protease that cleaves viral polyprotein and specific host proteins. It is responsible for the autocatalytic cleavage between the P1 and P2 regions, which is the first cleavage occurring in the polyprotein. Also cleaves the host translation initiation factor EIF4G1, in order to shut down the capped cellular mRNA translation. Inhibits the host nucleus-cytoplasm protein and RNA trafficking by cleaving host members of the nuclear pores including NUP98, NUP62 and NUP153. Counteracts stress granule formation probably by antagonizing its assembly or promoting its dissassembly. Cleaves and inhibits host IFIH1/MDA5, thereby inhibiting the type-I IFN production and the establishment of the antiviral state. Cleaves and inhibits host MAVS, thereby inhibiting the type-I IFN production and the establishment of the antiviral state. Its function is as follows. Plays an essential role in the virus replication cycle by acting as a viroporin. Creates a pore in the host endoplasmic reticulum and as a consequence releases Ca2+ in the cytoplasm of infected cell. In turn, high levels of cytoplasmic calcium may trigger membrane trafficking and transport of viral ER-associated proteins to viroplasms, sites of viral genome replication. Induces and associates with structural rearrangements of intracellular membranes. Displays RNA-binding, nucleotide binding and NTPase activities. May play a role in virion morphogenesis and viral RNA encapsidation by interacting with the capsid protein VP3. Functionally, localizes the viral replication complex to the surface of membranous vesicles. Together with protein 3CD binds the Cis-Active RNA Element (CRE) which is involved in RNA synthesis initiation. Acts as a cofactor to stimulate the activity of 3D polymerase, maybe through a nucleid acid chaperone activity. In terms of biological role, localizes the viral replication complex to the surface of membranous vesicles. It inhibits host cell endoplasmic reticulum-to-Golgi apparatus transport and causes the disassembly of the Golgi complex, possibly through GBF1 interaction. This would result in depletion of MHC, trail receptors and IFN receptors at the host cell surface. Plays an essential role in viral RNA replication by recruiting ACBD3 and PI4KB at the viral replication sites, thereby allowing the formation of the rearranged membranous structures where viral replication takes place. Its function is as follows. Acts as a primer for viral RNA replication and remains covalently bound to viral genomic RNA. VPg is uridylylated prior to priming replication into VPg-pUpU. The oriI viral genomic sequence may act as a template for this. The VPg-pUpU is then used as primer on the genomic RNA poly(A) by the RNA-dependent RNA polymerase to replicate the viral genome. During genome replication, the VPg-RNA linkage is removed by the host TDP2, thereby accelerating replication. During the late stage of the replication cycle, host TDP2 is excluded from sites of viral RNA synthesis and encapsidation, allowing for the generation of progeny virions. Involved in the viral replication complex and viral polypeptide maturation. It exhibits protease activity with a specificity and catalytic efficiency that is different from protease 3C. Protein 3CD binds to the 5'UTR of the viral genome. Functionally, major viral protease that mediates proteolytic processing of the polyprotein. Cleaves host EIF5B, contributing to host translation shutoff. Cleaves also host PABPC1, contributing to host translation shutoff. Cleaves host RIGI and thus contributes to the inhibition of type I interferon production. Cleaves host NLRP1, triggers host N-glycine-mediated degradation of the autoinhibitory NLRP1 N-terminal fragment. Inhibits the integrated stress response (ISR) in the infected cell by cleaving host G3BP1. Stress granule formation is thus inhibited, which allows protein synthesis and viral replication. In terms of biological role, replicates the viral genomic RNA on the surface of intracellular membranes. May form linear arrays of subunits that propagate along a strong head-to-tail interaction called interface-I. Covalently attaches UMP to a tyrosine of VPg, which is used to prime RNA synthesis. The positive stranded RNA genome is first replicated at virus induced membranous vesicles, creating a dsRNA genomic replication form. This dsRNA is then used as template to synthesize positive stranded RNA genomes. ss(+)RNA genomes are either translated, replicated or encapsidated. In Homo sapiens (Human), this protein is Genome polyprotein.